The primary structure comprises 210 residues: Na(+)-translocating NADH-quinone reductase subunit D (210 aa).

A run of 5 helical transmembrane segments spans residues 42–62 (FVMT…VSLI), 72–92 (IIVQ…ILKA), 103–123 (VFVG…AFAM), 131–151 (FIDG…VGFF), and 178–198 (NGLM…IWAI).

Belongs to the NqrDE/RnfAE family. In terms of assembly, composed of six subunits; NqrA, NqrB, NqrC, NqrD, NqrE and NqrF.

It localises to the cell inner membrane. It catalyses the reaction a ubiquinone + n Na(+)(in) + NADH + H(+) = a ubiquinol + n Na(+)(out) + NAD(+). NQR complex catalyzes the reduction of ubiquinone-1 to ubiquinol by two successive reactions, coupled with the transport of Na(+) ions from the cytoplasm to the periplasm. NqrA to NqrE are probably involved in the second step, the conversion of ubisemiquinone to ubiquinol. The sequence is that of Na(+)-translocating NADH-quinone reductase subunit D from Vibrio cholerae serotype O1 (strain M66-2).